Reading from the N-terminus, the 173-residue chain is Photosystem I assembly protein Ycf3 (173 aa).

TPR repeat units lie at residues Ala35–Pro68, Ser72–Met105, and Gly120–Asn153.

This sequence belongs to the Ycf3 family.

It localises to the cellular thylakoid membrane. Functionally, essential for the assembly of the photosystem I (PSI) complex. May act as a chaperone-like factor to guide the assembly of the PSI subunits. The polypeptide is Photosystem I assembly protein Ycf3 (Synechococcus elongatus (strain ATCC 33912 / PCC 7942 / FACHB-805) (Anacystis nidulans R2)).